We begin with the raw amino-acid sequence, 487 residues long: 3-octaprenyl-4-hydroxybenzoate carboxy-lyase (487 aa).

Asn-172 is a binding site for Mn(2+). Prenylated FMN-binding positions include Ile-175–Arg-177, Arg-189–Leu-191, and Arg-194–Gly-195. Glu-238 serves as a coordination point for Mn(2+). The active-site Proton donor is the Asp-287.

The protein belongs to the UbiD family. As to quaternary structure, homohexamer. Prenylated FMN serves as cofactor. Mn(2+) is required as a cofactor.

The protein localises to the cell membrane. The enzyme catalyses a 4-hydroxy-3-(all-trans-polyprenyl)benzoate + H(+) = a 2-(all-trans-polyprenyl)phenol + CO2. The protein operates within cofactor biosynthesis; ubiquinone biosynthesis. Its function is as follows. Catalyzes the decarboxylation of 3-octaprenyl-4-hydroxy benzoate to 2-octaprenylphenol, an intermediate step in ubiquinone biosynthesis. This Actinobacillus pleuropneumoniae serotype 3 (strain JL03) protein is 3-octaprenyl-4-hydroxybenzoate carboxy-lyase.